Here is a 333-residue protein sequence, read N- to C-terminus: D-fructose 1,6-bisphosphatase class 2/sedoheptulose 1,7-bisphosphatase (333 aa).

Residues D33, E57, D85, and E88 each contribute to the Mn(2+) site. Substrate-binding positions include 88–90 (EGT), Y119, 164–166 (RTR), and 186–188 (DGD). E213 provides a ligand contact to Mn(2+).

This sequence belongs to the FBPase class 2 family. In terms of assembly, homotetramer. It depends on Mn(2+) as a cofactor.

The catalysed reaction is beta-D-fructose 1,6-bisphosphate + H2O = beta-D-fructose 6-phosphate + phosphate. It carries out the reaction D-sedoheptulose 1,7-bisphosphate + H2O = D-sedoheptulose 7-phosphate + phosphate. It functions in the pathway carbohydrate biosynthesis; Calvin cycle. Catalyzes the hydrolysis of fructose 1,6-bisphosphate (Fru 1,6-P2) and sedoheptulose 1,7-bisphosphate (Sed 1,7-P2) to fructose 6-phosphate and sedoheptulose 7-phosphate, respectively. The protein is D-fructose 1,6-bisphosphatase class 2/sedoheptulose 1,7-bisphosphatase of Prochlorococcus marinus (strain AS9601).